A 1418-amino-acid chain; its full sequence is MPKEDDSLCKIVVRREPLDVLLPYYDASETTVQKILHENDSTLSVKFLAGVEALIKKDELDKYKNGKACLRVWLKHKSRKRYHGYMTSTDKDEEEKNDYLLKSNGSKVLRDSTRTKKFKFGKEFHCALNPSFVSDETASDSATSSSSDTNKKVNRKEHNELSLSHLSFNDTSDFGSSDLSSSEIESTENDNKAPYFSLLYSDGFDFIKFLHVCVCVKCHGREHRSSGKNFVYCDHCSNVYHYDCSPLPSLNKETRNYSQQNGFICPLCSKNSKDVLCNTGFVSGVSSGQDLVIPPSLADRESLSILVNYCKSIRFRCFRCRRVEYFFYLDSNPLSIQRTITHFIKKLVCNECSMHPCDIEEIIAWRTLNSLYPSKATLSNNFVSTSDLSFWSREYFVRSKGKSYLHCFWCSASWLAGISLAKKKNFDGLENASYDATKPIIPVSYTIIDKVWDVQYRSGKNARTAKYKTKKHQLKAISEVTFAFVSWRGLTYYMSNWEPPPKETDRNRWKAWLKGYSDLLECLWIEKAPTASINIDLPFTNLEWHSQPSFIKGGTLMPYQLKGLNWLYLRWYTHHPCILADEMGLGKTVQVISFISVLFYRHKCFPVLVIVPHATVANWERELKKWAPFLQINVLVGSEKNRSLVRDYRLINQKDPKHVSTHVLVISASNVEREISLLRKFQWKVLIVDEGQRLKNDQSSLFYYLSSVKSDFKLLLTGTPLQNNVRELFNLLQFLNPMKINAAELEKRYSIIDTEKVTELHQILKPFFLRRVKSEVLDNFPTKVEVIIPLSMTPVQKGLYKSILSKNLSLLRNITGYANTSSSGGQRTTSLNNILMQLRKTLAHPYIYSPDIEDRNLPYELAMRSLEEASCKFLILRLLVPKLITRGHRILLFSQFIQQLDILEDWFEYKNIAYARFDGASSEMERQSAIDSFNAPNSELSCFLLSTRAGGVGINLASADTVIILDPDFNPHQDMQAIARAHRYGQKKKVLVFVLTTRDSVEEKIIQNAQKKLVLDHLIVESLDQNHNSEKDLESILRHGARALFEEAGDEPSIKYNEYSVELLISEAEKQEDTSTDESDIKSNKFGFFRVWDNKHISSNHYEVKENVLVDEEDVWSVILKQREKDAMLEKTDETTSNRRLRAHHKIHYGEDLNIYDNSDDTDYTVNDRSSPGSPFPIETETISSITDTLSDKQKLKYDSSVNIENLNDESDSQKSADVHFDSILAKSLLATTPKEDEFNKTLSTINLEVANKLTSSEYINDSEMQLIDDPVFYPPYEIIEKNHQLVGRSLSKAVLDNFFLLSSLSDNVRCRCCGIKHLPAHCPLSIVPLEICFLCGTPHFSGRDTCPMLRNKEAIYRLKDSLSKSREPFHIKKQAMARLNSFLQKKEEPTVSSSAKTNELSSKVIIKESIINEAKTL.

Residues 135 to 148 (DETASDSATSSSSD) show a composition bias toward low complexity. The disordered stretch occupies residues 135 to 156 (DETASDSATSSSSDTNKKVNRK). The PHD-type zinc-finger motif lies at 212 to 271 (VCVCVKCHGREHRSSGKNFVYCDHCSNVYHYDCSPLPSLNKETRNYSQQNGFICPLCSKN). An RING-type; atypical zinc finger spans residues 215–269 (CVKCHGREHRSSGKNFVYCDHCSNVYHYDCSPLPSLNKETRNYSQQNGFICPLCS). Residues 568–738 (YLRWYTHHPC…FNLLQFLNPM (171 aa)) enclose the Helicase ATP-binding domain. 581–588 (DEMGLGKT) lines the ATP pocket. The region spanning 875 to 1034 (ILRLLVPKLI…QNHNSEKDLE (160 aa)) is the Helicase C-terminal domain.

This sequence belongs to the SNF2/RAD54 helicase family. As to quaternary structure, interacts with clr3.

It is found in the nucleus. The protein resides in the chromosome. The protein localises to the centromere. Its subcellular location is the telomere. Functionally, required for proper positioning of nucleosomes at heterochromatic loci and for transcriptional gene silencing (TGS) function of the Snf2/Hdac-containing repressor complex (SHREC). In Schizosaccharomyces pombe (strain 972 / ATCC 24843) (Fission yeast), this protein is Chromatin remodeling factor mit1 (mit1).